The chain runs to 508 residues: Adenylosuccinate synthetase 1, chloroplastic (508 aa).

The transit peptide at 1-56 directs the protein to the chloroplast; it reads MNISILRLDSNPITTATSPATATANHRSGILGCYNGTYSCRLNQLQQRKKNPSIIV. GTP-binding positions include 95-101 and 123-125; these read GDEGKGK and GHT. Aspartate 96 functions as the Proton acceptor in the catalytic mechanism. Mg(2+) contacts are provided by aspartate 96 and glycine 123. Residues 96-99, 121-124, threonine 213, arginine 227, glutamine 307, threonine 322, and arginine 386 contribute to the IMP site; these read DEGK and NAGH. The Proton donor role is filled by histidine 124. 382-388 is a binding site for substrate; that stretch reads TTTGRPR. Residues arginine 388, 414-416, and 497-499 each bind GTP; these read KLD and GIG.

The protein belongs to the adenylosuccinate synthetase family. As to quaternary structure, homodimer. Mg(2+) serves as cofactor.

The protein resides in the plastid. It localises to the chloroplast. It carries out the reaction IMP + L-aspartate + GTP = N(6)-(1,2-dicarboxyethyl)-AMP + GDP + phosphate + 2 H(+). It participates in purine metabolism; AMP biosynthesis via de novo pathway; AMP from IMP: step 1/2. Plays an important role in the de novo pathway and in the salvage pathway of purine nucleotide biosynthesis. Catalyzes the first committed step in the biosynthesis of AMP from IMP. This chain is Adenylosuccinate synthetase 1, chloroplastic, found in Capsicum frutescens (Cayenne pepper).